The primary structure comprises 361 residues: Hydroxyproline O-arabinosyltransferase PLENTY (361 aa).

A helical; Signal-anchor transmembrane segment spans residues 13 to 33; that stretch reads LLMLLMVLGFFFATYNLVSMI.

It is found in the golgi apparatus membrane. It carries out the reaction trans-4-hydroxy-L-prolyl-[protein] + UDP-beta-L-arabinofuranose = O-(beta-L-arabinofuranosyl)-trans-4-hydroxy-L-prolyl-[protein] + UDP + H(+). Its function is as follows. Glycosyltransferase involved in the O-arabinosylation of several proteins including extensins and small signaling peptides. Catalyzes the transfer of the initial L-arabinose to the hydroxyl group of Hyp residues. Probably involved in the arabinosylation of CLAVATA3/ESR-related (CLE) signaling peptides that move from root to shoot, to interact with receptor kinase signaling that regulates nodulation. Involved in long distance nodulation signaling events. Involved in the autoregulation of nodulation (AON), a long distance systemic signaling from root to shoot and back again, which allows legumes to limit the number of root nodules formed based on available nitrogen and previous rhizobial colonization. This is Hydroxyproline O-arabinosyltransferase PLENTY from Lotus japonicus (Lotus corniculatus var. japonicus).